We begin with the raw amino-acid sequence, 74 residues long: Kappa-stichotoxin-Hmg1a (74 aa).

A signal peptide spans 1-22; the sequence is MKSQMIAAVLLIAFCLCVVVTA. Positions 23–39 are excised as a propeptide; the sequence is RMELQDVEDMENGFQKR. The 33-residue stretch at 42–74 folds into the ShKT domain; the sequence is CKDLIPVSECTDIRCRTSMKYRLNLCRKTCGSC. Intrachain disulfides connect Cys42–Cys74, Cys51–Cys67, and Cys56–Cys71.

This sequence belongs to the sea anemone type 1 potassium channel toxin family. Type 1a subfamily.

The protein localises to the secreted. It is found in the nematocyst. Its function is as follows. Potently blocks the voltage-gated potassium channel Kv1.1/KCNA1 (Ki=75 pM), KcsA (Ki~1 nM) and moderately blocks Kv1.2/KCNA2 (Ki=2.5 nM) and Kv1.3/KCNA3 (Ki=3.1 nM). Also facilitates acetylcholine release at the avian neuromuscular junction. Blockade and dissociation rate are sensitive to voltage. This is Kappa-stichotoxin-Hmg1a from Heteractis magnifica (Magnificent sea anemone).